Reading from the N-terminus, the 360-residue chain is Photosystem II protein D1 (360 aa).

Helical transmembrane passes span 29–46, 118–133, and 142–156; these read YIGW…TATT, HFLL…EWEF, and WISV…AASA. Residue H118 coordinates chlorophyll a. W126 lines the pheophytin a pocket. [CaMn4O5] cluster contacts are provided by D170 and E189. The helical transmembrane segment at 197–218 threads the bilayer; it reads FHQLGVAGVFGGSLFSAMHGSL. Position 198 (H198) interacts with chlorophyll a. Residues H215 and 264 to 265 contribute to the a quinone site; that span reads SF. H215 contacts Fe cation. H272 lines the Fe cation pocket. A helical transmembrane segment spans residues 274–288; the sequence is FLGLWPVVGIWFTAL. 4 residues coordinate [CaMn4O5] cluster: H332, E333, D342, and A344. Positions 345-360 are excised as a propeptide; sequence AGESLPVALTAPAVNG.

Belongs to the reaction center PufL/M/PsbA/D family. PSII is composed of 1 copy each of membrane proteins PsbA, PsbB, PsbC, PsbD, PsbE, PsbF, PsbH, PsbI, PsbJ, PsbK, PsbL, PsbM, PsbT, PsbX, PsbY, PsbZ, Psb30/Ycf12, at least 3 peripheral proteins of the oxygen-evolving complex and a large number of cofactors. It forms dimeric complexes. Requires The D1/D2 heterodimer binds P680, chlorophylls that are the primary electron donor of PSII, and subsequent electron acceptors. It shares a non-heme iron and each subunit binds pheophytin, quinone, additional chlorophylls, carotenoids and lipids. D1 provides most of the ligands for the Mn4-Ca-O5 cluster of the oxygen-evolving complex (OEC). There is also a Cl(-1) ion associated with D1 and D2, which is required for oxygen evolution. The PSII complex binds additional chlorophylls, carotenoids and specific lipids. as cofactor. In terms of processing, tyr-161 forms a radical intermediate that is referred to as redox-active TyrZ, YZ or Y-Z. C-terminally processed by CTPA; processing is essential to allow assembly of the oxygen-evolving complex and thus photosynthetic growth.

The protein resides in the plastid. It is found in the chloroplast thylakoid membrane. The enzyme catalyses 2 a plastoquinone + 4 hnu + 2 H2O = 2 a plastoquinol + O2. Its function is as follows. Photosystem II (PSII) is a light-driven water:plastoquinone oxidoreductase that uses light energy to abstract electrons from H(2)O, generating O(2) and a proton gradient subsequently used for ATP formation. It consists of a core antenna complex that captures photons, and an electron transfer chain that converts photonic excitation into a charge separation. The D1/D2 (PsbA/PsbD) reaction center heterodimer binds P680, the primary electron donor of PSII as well as several subsequent electron acceptors. In Rhodomonas salina (Cryptomonas salina), this protein is Photosystem II protein D1.